The following is a 269-amino-acid chain: Chymotrypsin-like elastase family member 3B (269 aa).

An N-terminal signal peptide occupies residues 1 to 16 (MLRLLSSLLLVALASG). Positions 17 to 27 (CGQPSHNPSSR) are cleaved as a propeptide — activation peptide. One can recognise a Peptidase S1 domain in the interval 28-267 (VVNGEEAVPH…FIDWIEETIA (240 aa)). A disulfide bridge links cysteine 57 with cysteine 73. Residues histidine 72 and aspartate 122 each act as charge relay system in the active site. Disulfide bonds link cysteine 156/cysteine 222, cysteine 187/cysteine 203, and cysteine 212/cysteine 243. Serine 216 acts as the Charge relay system in catalysis.

Belongs to the peptidase S1 family. Elastase subfamily.

The catalysed reaction is Preferential cleavage: Ala-|-Xaa. Does not hydrolyze elastin.. Efficient protease with alanine specificity but only little elastolytic activity. The sequence is that of Chymotrypsin-like elastase family member 3B (Cela3b) from Mus musculus (Mouse).